An 81-amino-acid chain; its full sequence is Small ribosomal subunit protein uS17 (81 aa).

This sequence belongs to the universal ribosomal protein uS17 family. As to quaternary structure, part of the 30S ribosomal subunit.

Functionally, one of the primary rRNA binding proteins, it binds specifically to the 5'-end of 16S ribosomal RNA. This Methylocella silvestris (strain DSM 15510 / CIP 108128 / LMG 27833 / NCIMB 13906 / BL2) protein is Small ribosomal subunit protein uS17.